Consider the following 410-residue polypeptide: MNFDNLEREDEQIAHLVQKEKERQENSIELIASENFVSKAVMEAMGSYLTNKYAEGYPSKRYYGGCHVVDEVEDLARERVKKLFGAEHANVQPHSGSQANMAVYFSILEPGDTVLGMDLSHGGHLTHGSPVNFSGRLFNFVSYGVDKETETINYETVRELALKHKPKLIVAGASAYSRIIDFKTLREIADEVGAYLMVDIAHIAGLVATGLHPSPVPYADFVTSTTHKTLRGPRGGLILCKEKFAKALDKNIFPGIQGGPLMHIIAAKAVCFKEALEPSFKTYMEQVVKNAHVLAEALESYGFKLVSNGTDNHLILVDLTNKDITGKDAEILLDSIGITLNKNTVPNETRSPFVTSGVRIGTPAITTRGFKEEEMKEIASIINDAIKEKDGDLEPLKARVKALCAKYPLY.

(6S)-5,6,7,8-tetrahydrofolate contacts are provided by residues L119 and 123 to 125 (GHL). K228 is subject to N6-(pyridoxal phosphate)lysine. (6S)-5,6,7,8-tetrahydrofolate is bound at residue 351–353 (SPF).

Belongs to the SHMT family. Homodimer. Requires pyridoxal 5'-phosphate as cofactor.

Its subcellular location is the cytoplasm. It catalyses the reaction (6R)-5,10-methylene-5,6,7,8-tetrahydrofolate + glycine + H2O = (6S)-5,6,7,8-tetrahydrofolate + L-serine. It functions in the pathway one-carbon metabolism; tetrahydrofolate interconversion. The protein operates within amino-acid biosynthesis; glycine biosynthesis; glycine from L-serine: step 1/1. Catalyzes the reversible interconversion of serine and glycine with tetrahydrofolate (THF) serving as the one-carbon carrier. This reaction serves as the major source of one-carbon groups required for the biosynthesis of purines, thymidylate, methionine, and other important biomolecules. Also exhibits THF-independent aldolase activity toward beta-hydroxyamino acids, producing glycine and aldehydes, via a retro-aldol mechanism. The sequence is that of Serine hydroxymethyltransferase from Clostridium perfringens (strain ATCC 13124 / DSM 756 / JCM 1290 / NCIMB 6125 / NCTC 8237 / Type A).